The chain runs to 272 residues: Hemin import ATP-binding protein HmuV (272 aa).

The 254-residue stretch at leucine 2 to arginine 255 folds into the ABC transporter domain. Residue glycine 34–serine 41 coordinates ATP.

This sequence belongs to the ABC transporter superfamily. Heme (hemin) importer (TC 3.A.1.14.5) family. In terms of assembly, the complex is composed of two ATP-binding proteins (HmuV), two transmembrane proteins (HmuU) and a solute-binding protein (HmuT).

Its subcellular location is the cell inner membrane. Part of the ABC transporter complex HmuTUV involved in hemin import. Responsible for energy coupling to the transport system. The chain is Hemin import ATP-binding protein HmuV from Burkholderia thailandensis (strain ATCC 700388 / DSM 13276 / CCUG 48851 / CIP 106301 / E264).